The sequence spans 396 residues: S-adenosylmethionine synthase (396 aa).

His-14 provides a ligand contact to ATP. Residue Asp-16 coordinates Mg(2+). Glu-42 contacts K(+). L-methionine-binding residues include Glu-55 and Gln-98. The segment at 98–108 (QSPDIAMGVDK) is flexible loop. ATP contacts are provided by residues 174–176 (DGK), 240–241 (RF), Asp-249, 255–256 (RK), Ala-272, and Lys-276. Asp-249 contributes to the L-methionine binding site. Lys-280 provides a ligand contact to L-methionine.

Belongs to the AdoMet synthase family. As to quaternary structure, homotetramer; dimer of dimers. The cofactor is Mg(2+). K(+) serves as cofactor.

The protein localises to the cytoplasm. The enzyme catalyses L-methionine + ATP + H2O = S-adenosyl-L-methionine + phosphate + diphosphate. It functions in the pathway amino-acid biosynthesis; S-adenosyl-L-methionine biosynthesis; S-adenosyl-L-methionine from L-methionine: step 1/1. Catalyzes the formation of S-adenosylmethionine (AdoMet) from methionine and ATP. The overall synthetic reaction is composed of two sequential steps, AdoMet formation and the subsequent tripolyphosphate hydrolysis which occurs prior to release of AdoMet from the enzyme. This chain is S-adenosylmethionine synthase, found in Caldicellulosiruptor saccharolyticus (strain ATCC 43494 / DSM 8903 / Tp8T 6331).